Reading from the N-terminus, the 388-residue chain is Succinate--CoA ligase [ADP-forming] subunit beta (388 aa).

The region spanning 9 to 244 (KQLFAEYGLP…PSQDDPREAH (236 aa)) is the ATP-grasp domain. Residues K46, 53 to 55 (GRG), E99, T102, and E107 contribute to the ATP site. N199 and D213 together coordinate Mg(2+). Substrate contacts are provided by residues N264 and 321-323 (GIV).

This sequence belongs to the succinate/malate CoA ligase beta subunit family. Heterotetramer of two alpha and two beta subunits. The cofactor is Mg(2+).

It carries out the reaction succinate + ATP + CoA = succinyl-CoA + ADP + phosphate. The enzyme catalyses GTP + succinate + CoA = succinyl-CoA + GDP + phosphate. The protein operates within carbohydrate metabolism; tricarboxylic acid cycle; succinate from succinyl-CoA (ligase route): step 1/1. Functionally, succinyl-CoA synthetase functions in the citric acid cycle (TCA), coupling the hydrolysis of succinyl-CoA to the synthesis of either ATP or GTP and thus represents the only step of substrate-level phosphorylation in the TCA. The beta subunit provides nucleotide specificity of the enzyme and binds the substrate succinate, while the binding sites for coenzyme A and phosphate are found in the alpha subunit. This is Succinate--CoA ligase [ADP-forming] subunit beta from Pseudomonas syringae pv. syringae (strain B728a).